A 391-amino-acid chain; its full sequence is Phosphoglycerate kinase (391 aa).

Residues 21-23, R36, 59-62, R113, and R146 contribute to the substrate site; these read DLN and HLGR. ATP contacts are provided by residues K197, E319, and 345 to 348; that span reads GGDT.

It belongs to the phosphoglycerate kinase family. Monomer.

The protein localises to the cytoplasm. The catalysed reaction is (2R)-3-phosphoglycerate + ATP = (2R)-3-phospho-glyceroyl phosphate + ADP. Its pathway is carbohydrate degradation; glycolysis; pyruvate from D-glyceraldehyde 3-phosphate: step 2/5. The chain is Phosphoglycerate kinase from Shewanella putrefaciens (strain CN-32 / ATCC BAA-453).